A 335-amino-acid chain; its full sequence is Fructose-1,6-bisphosphatase class 1 (335 aa).

4 residues coordinate Mg(2+): E93, D117, L119, and D120. Substrate is bound by residues 120-123, N213, Y244, and K274; that span reads DGSS. E280 contributes to the Mg(2+) binding site.

Belongs to the FBPase class 1 family. In terms of assembly, homotetramer. The cofactor is Mg(2+).

Its subcellular location is the cytoplasm. It catalyses the reaction beta-D-fructose 1,6-bisphosphate + H2O = beta-D-fructose 6-phosphate + phosphate. It functions in the pathway carbohydrate biosynthesis; gluconeogenesis. The sequence is that of Fructose-1,6-bisphosphatase class 1 from Flavobacterium psychrophilum (strain ATCC 49511 / DSM 21280 / CIP 103535 / JIP02/86).